We begin with the raw amino-acid sequence, 754 residues long: Endothelin-converting enzyme 1 (754 aa).

At 1 to 52 the chain is on the cytoplasmic side; sequence MMSTYKRATLDEEDLVDSLSEGEVYPNGLQVNFRNFRSSQRCWATRTQVEKR. The residue at position 9 (threonine 9) is a Phosphothreonine. Residues 53-73 form a helical; Signal-anchor for type II membrane protein membrane-spanning segment; the sequence is LIVLVALLAAGLVACLTALGI. Topologically, residues 74–754 are extracellular; it reads QYRTRTPPVC…MNPRHKCEVW (681 aa). A Peptidase M13 domain is found at 82 to 754; it reads VCLSEACVSV…MNPRHKCEVW (673 aa). Cystine bridges form between cysteine 83–cysteine 88, cysteine 106–cysteine 739, cysteine 114–cysteine 699, cysteine 169–cysteine 419, and cysteine 628–cysteine 751. Residues asparagine 150, asparagine 171, asparagine 194, asparagine 254, asparagine 300, asparagine 346, asparagine 367, and asparagine 523 are each glycosylated (N-linked (GlcNAc...) asparagine). A Zn(2+)-binding site is contributed by histidine 591. Residue glutamate 592 is part of the active site. A Zn(2+)-binding site is contributed by histidine 595. N-linked (GlcNAc...) asparagine glycans are attached at residues asparagine 616 and asparagine 635. Glutamate 651 contributes to the Zn(2+) binding site. Aspartate 655 (proton donor) is an active-site residue.

It belongs to the peptidase M13 family. As to quaternary structure, homodimer; disulfide-linked. Interacts with PPP1R16B. Interacts with TSPAN8; this interaction recruits the endothelin converting enzyme ECE1 to tetraspanin-enriched microdomains and positively modulates its enzymatic activity. The cofactor is Zn(2+).

The protein resides in the cell membrane. The catalysed reaction is Hydrolysis of the 21-Trp-|-Val-22 bond in big endothelin to form endothelin 1.. With respect to regulation, inhibited by phosphoramidon. Converts big endothelin-1 to endothelin-1. The sequence is that of Endothelin-converting enzyme 1 (ECE1) from Cavia porcellus (Guinea pig).